The sequence spans 418 residues: Lariat debranching enzyme (418 aa).

A divalent metal cation-binding residues include cysteine 8, histidine 10, aspartate 39, and asparagine 84. Positions 124–154 are lariat recognition loop; it reads SGIYNERHYRSGHFERPPYNESTIRSVYHVR. A divalent metal cation is bound by residues histidine 174, histidine 226, and histidine 228. The disordered stretch occupies residues 372–418; sequence GERTDIPASLAPSDLPTYDSEEIPIDDIDEIEEMEEAKADDHTRDDA. Over residues 390–406 the composition is skewed to acidic residues; it reads DSEEIPIDDIDEIEEME. Over residues 407 to 418 the composition is skewed to basic and acidic residues; it reads EAKADDHTRDDA.

It belongs to the lariat debranching enzyme family. The cofactor is Fe(2+). Zn(2+) is required as a cofactor. Requires Mn(2+) as cofactor. Widely expressed. Expressed in roots, stems, cauline and rosette leaves, flower buds and siliques.

Its subcellular location is the nucleus. Active in presence of diverse metals including Fe(2+), Zn(2+), Mn(2+). Binds two metal cations in two adjacent alpha and beta metal-binding pockets. Its function is as follows. Cleaves the 2'-5' phosphodiester linkage at the branch point of lariat intron pre-mRNAs after splicing and converts them into linear molecules that are subsequently degraded. It thereby facilitates ribonucleotide turnover. It may also participate in retrovirus replication via an RNA lariat intermediate in cDNA synthesis. Plays en essential role during embryogenesis. The sequence is that of Lariat debranching enzyme (DBR1) from Arabidopsis thaliana (Mouse-ear cress).